The chain runs to 303 residues: 5-dehydro-4-deoxyglucarate dehydratase (303 aa).

The protein belongs to the DapA family.

It catalyses the reaction 5-dehydro-4-deoxy-D-glucarate + H(+) = 2,5-dioxopentanoate + CO2 + H2O. It functions in the pathway carbohydrate acid metabolism; D-glucarate degradation; 2,5-dioxopentanoate from D-glucarate: step 2/2. The chain is 5-dehydro-4-deoxyglucarate dehydratase from Pseudomonas putida (Arthrobacter siderocapsulatus).